We begin with the raw amino-acid sequence, 261 residues long: UPF0328 protein ECU02_0020/ECU04_1700 (261 aa).

Positions 1-20 (MSITSIPQPHETNEQHHTEI) are disordered. Residues 11–20 (ETNEQHHTEI) are compositionally biased toward basic and acidic residues.

The protein belongs to the UPF0328 family.

The chain is UPF0328 protein ECU02_0020/ECU04_1700 from Encephalitozoon cuniculi (strain GB-M1) (Microsporidian parasite).